A 535-amino-acid chain; its full sequence is Glucan 1,6-alpha-glucosidase (535 aa).

Catalysis depends on D194, which acts as the Nucleophile. E236 functions as the Proton donor in the catalytic mechanism.

The protein belongs to the glycosyl hydrolase 13 family.

The protein localises to the cytoplasm. It carries out the reaction Hydrolysis of (1-&gt;6)-alpha-D-glucosidic linkages in (1-&gt;6)-alpha-D-glucans and derived oligosaccharides.. In terms of biological role, the physiological substrates may be short isomaltosaccharides. This chain is Glucan 1,6-alpha-glucosidase (dexB), found in Streptococcus pneumoniae serotype 4 (strain ATCC BAA-334 / TIGR4).